A 71-amino-acid polypeptide reads, in one-letter code: ATP synthase subunit c (71 aa).

The next 2 helical transmembrane spans lie at 5–25 (GAAI…AIIV) and 47–67 (FIGV…GFLI).

The protein belongs to the ATPase C chain family. In terms of assembly, F-type ATPases have 2 components, F(1) - the catalytic core - and F(0) - the membrane proton channel. F(1) has five subunits: alpha(3), beta(3), gamma(1), delta(1), epsilon(1). F(0) has three main subunits: a(1), b(2) and c(10-14). The alpha and beta chains form an alternating ring which encloses part of the gamma chain. F(1) is attached to F(0) by a central stalk formed by the gamma and epsilon chains, while a peripheral stalk is formed by the delta and b chains.

It is found in the cell membrane. Its function is as follows. F(1)F(0) ATP synthase produces ATP from ADP in the presence of a proton or sodium gradient. F-type ATPases consist of two structural domains, F(1) containing the extramembraneous catalytic core and F(0) containing the membrane proton channel, linked together by a central stalk and a peripheral stalk. During catalysis, ATP synthesis in the catalytic domain of F(1) is coupled via a rotary mechanism of the central stalk subunits to proton translocation. Functionally, key component of the F(0) channel; it plays a direct role in translocation across the membrane. A homomeric c-ring of between 10-14 subunits forms the central stalk rotor element with the F(1) delta and epsilon subunits. The chain is ATP synthase subunit c from Alkalihalobacillus alcalophilus (Bacillus alcalophilus).